The sequence spans 463 residues: MPPSGPQGTLLLLPLLLLLLLRAVLAVPLERGAPNKEETPATESPDTGLYYHRYLQEVIDVLETDGHFREKLQAANAEDIKSGKLSRELDFVSHHVRTKLDELKRQEVSRLRMLLKAKMDAEQDPNVQVDHLNLLKQFEHLDPQNQHTFEARDLELLIQTATRDLAQYDAAHHEEFKRYEMLKEHERRRYLESLGEEQRKEAERRLEEQQRRHREHPKVNVPGSQAQLKEVWEELDGLDPNRFNPKTFFILHDINSDGVLDEQELEALFTKELEKVYDPKNEEDDMREMEEERLRMREHVMKNVDTNQDRLVTLGEFLASTQRKEFGDTGEGWETVEMHPAYTEEELRRFEEELAAREAELNAKAQRLSQETEALGRSQGRLEAQKRELQQAVLHMEQRKQQQQQQQQQGHKAPAAHPEGQLKFHPDTDDVPVPAPAGDQKEVDTSEKKLLERLPEVEVPQHL.

The N-terminal stretch at 1–26 (MPPSGPQGTLLLLPLLLLLLLRAVLA) is a signal peptide. Phosphoserine is present on Ser86. Thr148 bears the Phosphothreonine mark. The stretch at 150–218 (EARDLELLIQ…QQRRHREHPK (69 aa)) forms a coiled coil. A DNA-binding region spans residues 172-218 (HHEEFKRYEMLKEHERRRYLESLGEEQRKEAERRLEEQQRRHREHPK). Positions 193–210 (SLGEEQRKEAERRLEEQQ) are enriched in basic and acidic residues. The segment at 193 to 221 (SLGEEQRKEAERRLEEQQRRHREHPKVNV) is disordered. The interval 228 to 321 (LKEVWEELDG…VTLGEFLAST (94 aa)) is binds to GNAI2 and GNAI3. EF-hand domains are found at residues 240-275 (PNRF…ELEK) and 292-327 (ERLR…KEFG). Positions 253, 255, 257, 264, 305, 307, 309, and 316 each coordinate Ca(2+). Residues 303-333 (NVDTNQDRLVTLGEFLASTQRKEFGDTGEGW) carry the GBA motif. A coiled-coil region spans residues 341-409 (AYTEEELRRF…KQQQQQQQQQ (69 aa)). Residues 368-463 (LSQETEALGR…LPEVEVPQHL (96 aa)) are disordered. Ser369 bears the Phosphoserine mark. Positions 439-463 (DQKEVDTSEKKLLERLPEVEVPQHL) are enriched in basic and acidic residues.

This sequence belongs to the nucleobindin family. In terms of assembly, interacts (via GBA motif) with guanine nucleotide-binding protein G(i) alpha subunits GNAI1, GNAI2 and GNAI3 with higher affinity for GNAI1 and GNAI3 than for GNAI2. Preferentially interacts with inactive rather than active GNAI3. Interaction with GNAI3 is inhibited when NUCB1 binds calcium, probably due to a conformational change which renders the GBA motif inaccessible.

Its subcellular location is the golgi apparatus. It localises to the cis-Golgi network membrane. The protein localises to the cytoplasm. The protein resides in the secreted. Major calcium-binding protein of the Golgi which may have a role in calcium homeostasis. Acts as a non-receptor guanine nucleotide exchange factor which binds to and activates alpha subunits of guanine nucleotide-binding proteins (G proteins). The polypeptide is Nucleobindin-1 (NUCB1) (Pongo abelii (Sumatran orangutan)).